Here is a 1193-residue protein sequence, read N- to C-terminus: Probable cation-transporting ATPase 13A4 (1193 aa).

At Met1 to Arg32 the chain is on the cytoplasmic side. An intramembrane segment occupies Lys33–Trp53. The Cytoplasmic segment spans residues Arg54 to Leu198. The helical transmembrane segment at Leu199–Phe219 threads the bilayer. The Lumenal portion of the chain corresponds to Ser220–Lys224. Residues Glu225–Leu245 traverse the membrane as a helical segment. The Cytoplasmic portion of the chain corresponds to Arg246 to Arg401. Residues Phe402–Val422 form a helical membrane-spanning segment. Topologically, residues Leu423–Asp437 are lumenal. A helical membrane pass occupies residues Val438–Ala458. The Cytoplasmic portion of the chain corresponds to Gln459–Ser901. Residue Asp487 is the 4-aspartylphosphate intermediate of the active site. The Mg(2+) site is built by Asp849 and Asp853. The chain crosses the membrane as a helical span at residues Phe902–Leu922. Over Tyr923–Gln933 the chain is Lumenal. The chain crosses the membrane as a helical span at residues Phe934–Ala954. Residues Asn955 to Leu973 are Cytoplasmic-facing. Residues Leu974–Val994 form a helical membrane-spanning segment. Residues Gln995–Ser1036 are Lumenal-facing. The chain crosses the membrane as a helical span at residues Phe1037 to Phe1057. Over Ser1058–Tyr1071 the chain is Cytoplasmic. Residues Ile1072–Ile1092 traverse the membrane as a helical segment. The Lumenal portion of the chain corresponds to Pro1093 to Pro1105. A helical membrane pass occupies residues Val1106–Val1126. Over Glu1127–Leu1193 the chain is Cytoplasmic.

It belongs to the cation transport ATPase (P-type) (TC 3.A.3) family. Type V subfamily. In terms of tissue distribution, expressed in brain and stomach.

The protein localises to the early endosome membrane. It localises to the late endosome membrane. It is found in the recycling endosome membrane. The catalysed reaction is ATP + H2O = ADP + phosphate + H(+). The sequence is that of Probable cation-transporting ATPase 13A4 (Atp13a4) from Mus musculus (Mouse).